Consider the following 223-residue polypeptide: Serine/threonine/tyrosine-interacting protein (223 aa).

A Tyrosine-protein phosphatase domain is found at Glu-28–Ala-176. An Interaction with FBXW7 motif is present at residues Phe-76–Gln-78. A phosphoserine mark is found at Ser-184 and Ser-201. The interval Thr-199–Gly-223 is disordered.

It belongs to the protein-tyrosine phosphatase family. Non-receptor class subfamily. Interacts with MAPK1; independently of MAPK1 phosphorylation status. Interacts with CARHSP1/Crhsp-24. Interacts (via FQQ motif) with FBXW7 (via F-box domain); the interaction is direct and prevents FBXW7 interaction with SKP1, a component of the SCF(FBXW7) complex. In terms of tissue distribution, widely expressed with highest levels in muscle, testis and brain. In testis, expression starts 13-14 days after birth and is limited to the seminiferous tubule and to round and elongating spermatids. Expression is low in condensing spermatids and pachytene spermatocytes, and absent in spermatogonia, spermatozoa and somatic Sertoli cells.

The protein localises to the nucleus. It is found in the cytoplasm. The protein resides in the cytosol. Functionally, catalytically inactive phosphatase. Acts as a nuclear anchor for MAPK1/MAPK3 (ERK1/ERK2). Modulates cell-fate decisions and cell migration by spatiotemporal regulation of MAPK1/MAPK3 (ERK1/ERK2). By binding to the F-box of FBXW7, prevents the assembly of FBXW7 into the SCF E3 ubiquitin-protein ligase complex, and thereby inhibits degradation of its substrates. Plays a role in spermatogenesis. The polypeptide is Serine/threonine/tyrosine-interacting protein (Mus musculus (Mouse)).